A 443-amino-acid chain; its full sequence is MTKIYHFIGIKGSGMSALALMLHQMGHKVQGSDVDKYYFTQRGLEQAGIKILPFDAKNIQADYEIIAGNAFRPDNNVEIAYANEHGISYKRYHEFLGSFMRDFVSFGVAGAHGKTSTTGILSHVLSNITDTSYLIGDGTGRGSAGAKYFVFESDEYERHFMPYHPEYSIITNIDFDHPDYFTSLEDVFNAFNDYAKQITKGLFIYGEDEQLRRITSEAPIYYYGFEKGNDFVAHDLLRSTTGSTFKVSYRGQELGEFHIPTFGRHNIMNATAVIGLLYVSGFDLNLVREHLKTFAGVKRRFTEKVVNGTVIIDDFAHHPTEIIATLDAARQKYPSKEIVAIFQPHTFTRTIALLDEFADALNQADAVYLAQIYGSAREVDHGDVKVEDLAEKIVKRVQVVSVDNVSPLLDHDNAVYVFMGAGDIQTYEYSFERLLSNLTSNVQ.

An ATP-binding site is contributed by 110–116 (GAHGKTS).

Belongs to the MurCDEF family.

The protein resides in the cytoplasm. It catalyses the reaction UDP-N-acetyl-alpha-D-muramate + L-alanine + ATP = UDP-N-acetyl-alpha-D-muramoyl-L-alanine + ADP + phosphate + H(+). Its pathway is cell wall biogenesis; peptidoglycan biosynthesis. Functionally, cell wall formation. This is UDP-N-acetylmuramate--L-alanine ligase from Streptococcus gordonii (strain Challis / ATCC 35105 / BCRC 15272 / CH1 / DL1 / V288).